A 70-amino-acid chain; its full sequence is Cold shock-like protein CspJ (70 aa).

The CSD domain occupies G7–V67.

The protein localises to the cytoplasm. The protein is Cold shock-like protein CspJ (cspJ) of Salmonella typhi.